Reading from the N-terminus, the 95-residue chain is Aspartyl/glutamyl-tRNA(Asn/Gln) amidotransferase subunit C (95 aa).

It belongs to the GatC family. In terms of assembly, heterotrimer of A, B and C subunits.

It carries out the reaction L-glutamyl-tRNA(Gln) + L-glutamine + ATP + H2O = L-glutaminyl-tRNA(Gln) + L-glutamate + ADP + phosphate + H(+). The catalysed reaction is L-aspartyl-tRNA(Asn) + L-glutamine + ATP + H2O = L-asparaginyl-tRNA(Asn) + L-glutamate + ADP + phosphate + 2 H(+). Functionally, allows the formation of correctly charged Asn-tRNA(Asn) or Gln-tRNA(Gln) through the transamidation of misacylated Asp-tRNA(Asn) or Glu-tRNA(Gln) in organisms which lack either or both of asparaginyl-tRNA or glutaminyl-tRNA synthetases. The reaction takes place in the presence of glutamine and ATP through an activated phospho-Asp-tRNA(Asn) or phospho-Glu-tRNA(Gln). This Cytophaga hutchinsonii (strain ATCC 33406 / DSM 1761 / CIP 103989 / NBRC 15051 / NCIMB 9469 / D465) protein is Aspartyl/glutamyl-tRNA(Asn/Gln) amidotransferase subunit C.